Reading from the N-terminus, the 315-residue chain is Ribosomal protein L11 methyltransferase (315 aa).

4 residues coordinate S-adenosyl-L-methionine: Thr162, Gly183, Asp205, and Asn248.

The protein belongs to the methyltransferase superfamily. PrmA family.

The protein localises to the cytoplasm. The catalysed reaction is L-lysyl-[protein] + 3 S-adenosyl-L-methionine = N(6),N(6),N(6)-trimethyl-L-lysyl-[protein] + 3 S-adenosyl-L-homocysteine + 3 H(+). Its function is as follows. Methylates ribosomal protein L11. This Oceanobacillus iheyensis (strain DSM 14371 / CIP 107618 / JCM 11309 / KCTC 3954 / HTE831) protein is Ribosomal protein L11 methyltransferase.